Here is a 67-residue protein sequence, read N- to C-terminus: MKEVNIDTLISKIPNKYVLTVVISKRARQLFEELKFLKTIARDPLILAMEEIAQEKIAYGEGDDLED.

The protein belongs to the RNA polymerase subunit omega family. The RNAP catalytic core consists of 2 alpha, 1 beta, 1 beta' and 1 omega subunit. When a sigma factor is associated with the core the holoenzyme is formed, which can initiate transcription.

It carries out the reaction RNA(n) + a ribonucleoside 5'-triphosphate = RNA(n+1) + diphosphate. Its function is as follows. Promotes RNA polymerase assembly. Latches the N- and C-terminal regions of the beta' subunit thereby facilitating its interaction with the beta and alpha subunits. This chain is DNA-directed RNA polymerase subunit omega, found in Dictyoglomus turgidum (strain DSM 6724 / Z-1310).